A 134-amino-acid polypeptide reads, in one-letter code: Small ribosomal subunit protein uS8c (134 aa).

This sequence belongs to the universal ribosomal protein uS8 family. In terms of assembly, part of the 30S ribosomal subunit.

The protein localises to the plastid. The protein resides in the chloroplast. Functionally, one of the primary rRNA binding proteins, it binds directly to 16S rRNA central domain where it helps coordinate assembly of the platform of the 30S subunit. This Ipomoea purpurea (Common morning glory) protein is Small ribosomal subunit protein uS8c (rps8).